Reading from the N-terminus, the 182-residue chain is Large ribosomal subunit protein uL5 (182 aa).

The protein belongs to the universal ribosomal protein uL5 family. As to quaternary structure, part of the 50S ribosomal subunit; part of the 5S rRNA/L5/L18/L25 subcomplex. Contacts the 5S rRNA and the P site tRNA. Forms a bridge to the 30S subunit in the 70S ribosome.

Its function is as follows. This is one of the proteins that bind and probably mediate the attachment of the 5S RNA into the large ribosomal subunit, where it forms part of the central protuberance. In the 70S ribosome it contacts protein S13 of the 30S subunit (bridge B1b), connecting the 2 subunits; this bridge is implicated in subunit movement. Contacts the P site tRNA; the 5S rRNA and some of its associated proteins might help stabilize positioning of ribosome-bound tRNAs. This chain is Large ribosomal subunit protein uL5, found in Borrelia turicatae (strain 91E135).